The chain runs to 104 residues: Fluoride-specific ion channel FluC 2 (104 aa).

Helical transmembrane passes span 22 to 42 (IGPYVGTFIANMAACVVLAAV), 48 to 68 (LVMAAVGTGFAGALSTWSTLA), and 82 to 102 (MLLGYTTATILGGMVAVWCGL). Residues glycine 59 and serine 62 each contribute to the Na(+) site.

The protein belongs to the fluoride channel Fluc/FEX (TC 1.A.43) family.

It is found in the cell membrane. It carries out the reaction fluoride(in) = fluoride(out). Na(+) is not transported, but it plays an essential structural role and its presence is essential for fluoride channel function. In terms of biological role, fluoride-specific ion channel. Important for reducing fluoride concentration in the cell, thus reducing its toxicity. This chain is Fluoride-specific ion channel FluC 2, found in Corynebacterium diphtheriae (strain ATCC 700971 / NCTC 13129 / Biotype gravis).